A 236-amino-acid chain; its full sequence is LexA repressor (236 aa).

The segment at residues 26–46 (FDEMKDALDLRSKSGIHRLII) is a DNA-binding region (H-T-H motif). Residues Ser-157 and Lys-195 each act as for autocatalytic cleavage activity in the active site.

Belongs to the peptidase S24 family. Homodimer.

The enzyme catalyses Hydrolysis of Ala-|-Gly bond in repressor LexA.. Its function is as follows. Represses a number of genes involved in the response to DNA damage (SOS response), including recA and lexA. In the presence of single-stranded DNA, RecA interacts with LexA causing an autocatalytic cleavage which disrupts the DNA-binding part of LexA, leading to derepression of the SOS regulon and eventually DNA repair. The protein is LexA repressor of Methylocella silvestris (strain DSM 15510 / CIP 108128 / LMG 27833 / NCIMB 13906 / BL2).